The following is a 461-amino-acid chain: Bifunctional protein GlmU (461 aa).

Residues 1-235 form a pyrophosphorylase region; sequence MKAIILAAGL…ITEIFGVNDR (235 aa). UDP-N-acetyl-alpha-D-glucosamine contacts are provided by residues 6-9, lysine 20, glutamine 71, and 77-78; these read LAAG and GT. Residue aspartate 102 participates in Mg(2+) binding. UDP-N-acetyl-alpha-D-glucosamine contacts are provided by glycine 145, glutamate 160, asparagine 175, and asparagine 233. Residue asparagine 233 coordinates Mg(2+). The tract at residues 236–256 is linker; that stretch reads WELSFAESVIKMRILENLARS. Residues 257-461 are N-acetyltransferase; that stretch reads GVTIHSPESV…LEDKSKVKDE (205 aa). Arginine 339 and lysine 357 together coordinate UDP-N-acetyl-alpha-D-glucosamine. Residue histidine 369 is the Proton acceptor of the active site. The UDP-N-acetyl-alpha-D-glucosamine site is built by tyrosine 372 and asparagine 383. 4 residues coordinate acetyl-CoA: alanine 386, serine 411, glycine 429, and arginine 446.

The protein in the N-terminal section; belongs to the N-acetylglucosamine-1-phosphate uridyltransferase family. This sequence in the C-terminal section; belongs to the transferase hexapeptide repeat family. As to quaternary structure, homotrimer. Mg(2+) serves as cofactor.

It localises to the cytoplasm. It catalyses the reaction alpha-D-glucosamine 1-phosphate + acetyl-CoA = N-acetyl-alpha-D-glucosamine 1-phosphate + CoA + H(+). The enzyme catalyses N-acetyl-alpha-D-glucosamine 1-phosphate + UTP + H(+) = UDP-N-acetyl-alpha-D-glucosamine + diphosphate. Its pathway is nucleotide-sugar biosynthesis; UDP-N-acetyl-alpha-D-glucosamine biosynthesis; N-acetyl-alpha-D-glucosamine 1-phosphate from alpha-D-glucosamine 6-phosphate (route II): step 2/2. It functions in the pathway nucleotide-sugar biosynthesis; UDP-N-acetyl-alpha-D-glucosamine biosynthesis; UDP-N-acetyl-alpha-D-glucosamine from N-acetyl-alpha-D-glucosamine 1-phosphate: step 1/1. It participates in bacterial outer membrane biogenesis; LPS lipid A biosynthesis. Catalyzes the last two sequential reactions in the de novo biosynthetic pathway for UDP-N-acetylglucosamine (UDP-GlcNAc). The C-terminal domain catalyzes the transfer of acetyl group from acetyl coenzyme A to glucosamine-1-phosphate (GlcN-1-P) to produce N-acetylglucosamine-1-phosphate (GlcNAc-1-P), which is converted into UDP-GlcNAc by the transfer of uridine 5-monophosphate (from uridine 5-triphosphate), a reaction catalyzed by the N-terminal domain. In Hydrogenobaculum sp. (strain Y04AAS1), this protein is Bifunctional protein GlmU.